Consider the following 243-residue polypeptide: Polycomb group RING finger protein 1 (243 aa).

A Glycyl lysine isopeptide (Lys-Gly) (interchain with G-Cter in SUMO2) cross-link involves residue Lys-12. The RING-type zinc finger occupies Cys-35–Asn-74. A necessary for repressor activity region spans residues Asn-74 to Pro-231. Lys-76 participates in a covalent cross-link: Glycyl lysine isopeptide (Lys-Gly) (interchain with G-Cter in SUMO2). The tract at residues Leu-138–Lys-239 is required for the interaction with the KDM2B-SKP1 heterodimeric complex. The RING-finger and WD40-associated ubiquitin-like domain (RAWUL); sufficient for interaction with BCOR and BCORL1 stretch occupies residues Glu-151–Lys-239.

In terms of assembly, interacts with BCORL1, forming heterodimers. The PCGF1-BCORL1 heterodimeric complex interacts with the KDM2B-SKP1 heterodimeric complex to form a homotetrameric polycomb repression complex 1 (PRC1.1). Component of the repressive BCOR complex containing a Polycomb group subcomplex at least composed of RYBP, RING1 and RNF2/RING2. Specifically interacts with BCOR, RING1 and RNF2/RING2. Component of a PRC1-like complex. Interacts with CBX6, CBX7 and CBX8. Interacts with DPPA4, NANOG, POU5F1 and RYBP. In terms of tissue distribution, highly expressed in brain, cerebellum, heart and testis.

The protein resides in the nucleus. Functionally, component of the Polycomb group (PcG) multiprotein BCOR complex, a complex required to maintain the transcriptionally repressive state of some genes, such as BCL6 and the cyclin-dependent kinase inhibitor, CDKN1A. Transcriptional repressor that may be targeted to the DNA by BCL6; this transcription repressor activity may be related to PKC signaling pathway. Represses CDKN1A expression by binding to its promoter, and this repression is dependent on the retinoic acid response element (RARE element). Promotes cell cycle progression and enhances cell proliferation as well. May have a positive role in tumor cell growth by down-regulating CDKN1A. Component of a Polycomb group (PcG) multiprotein PRC1-like complex, a complex class required to maintain the transcriptionally repressive state of many genes, including Hox genes, throughout development. PcG PRC1 complex acts via chromatin remodeling and modification of histones; it mediates monoubiquitination of histone H2A 'Lys-119', rendering chromatin heritably changed in its expressibility. Within the PRC1-like complex, regulates RNF2 ubiquitin ligase activity. Regulates the expression of DPPA4 and NANOG in the NT2 embryonic carcinoma cells. This is Polycomb group RING finger protein 1 (Pcgf1) from Rattus norvegicus (Rat).